The following is a 307-amino-acid chain: Metapyrocatechase (307 aa).

VOC domains follow at residues 7-122 (RPGH…LYAD) and 150-269 (RFDH…VFCG). Fe cation contacts are provided by H153, H214, and E265.

Belongs to the extradiol ring-cleavage dioxygenase family. Homotetramer. The cofactor is Fe(2+).

It catalyses the reaction catechol + O2 = (2Z,4E)-2-hydroxy-6-oxohexa-2,4-dienoate + H(+). It functions in the pathway aromatic compound metabolism; benzoate degradation via hydroxylation. This Pseudomonas sp. (strain CF600) protein is Metapyrocatechase (dmpB).